The primary structure comprises 356 residues: MEESKKGSGLTAEKSKALAAALAQIEKQFGKGSIMRLGDGEAVEDIQVVSTGSLGLDIALGVGGLPRGRVVEIYGPESSGKTTLTLQVIAEMQKLGGTAAFIDAEHALDVQYASKLGVNVPELLISQPDTGEQALEIVDALVRSGSIDMIVIDSVAALVPKAEIEGEMGDALPGLQARLMSQALRKLTGTIKRTNCLVIFINQIRMKIGVMFGNPETTTGGNALKFYSSVRLDIRRIGSIKKNDEVIGNETRVKVVKNKVSPPFREAIFDILYGEGISRQGEIIDLGVQAKIVDKAGAWYSYSGEKIGQGKDNAREFLRENPEIAREIENRIRESLGVAAMPQGAGSEAEIMDEEE.

75-82 is an ATP binding site; sequence GPESSGKT.

The protein belongs to the RecA family.

It localises to the cytoplasm. Can catalyze the hydrolysis of ATP in the presence of single-stranded DNA, the ATP-dependent uptake of single-stranded DNA by duplex DNA, and the ATP-dependent hybridization of homologous single-stranded DNAs. It interacts with LexA causing its activation and leading to its autocatalytic cleavage. In Burkholderia mallei (strain ATCC 23344), this protein is Protein RecA.